Here is a 139-residue protein sequence, read N- to C-terminus: Large ribosomal subunit protein uL16 (139 aa).

The segment covering 1 to 20 (MLIPRRVKHRKQHHPKRRGQ) has biased composition (basic residues). Positions 1-25 (MLIPRRVKHRKQHHPKRRGQAKGGT) are disordered.

It belongs to the universal ribosomal protein uL16 family. In terms of assembly, part of the 50S ribosomal subunit.

Binds 23S rRNA and is also seen to make contacts with the A and possibly P site tRNAs. The sequence is that of Large ribosomal subunit protein uL16 from Streptomyces avermitilis (strain ATCC 31267 / DSM 46492 / JCM 5070 / NBRC 14893 / NCIMB 12804 / NRRL 8165 / MA-4680).